The sequence spans 347 residues: tRNA N6-adenosine threonylcarbamoyltransferase (347 aa).

The Fe cation site is built by histidine 115 and histidine 119. Substrate contacts are provided by residues 137–141 (LASGG), aspartate 170, glycine 183, and asparagine 281. Aspartate 309 contacts Fe cation.

It belongs to the KAE1 / TsaD family. Fe(2+) serves as cofactor.

The protein resides in the cytoplasm. The catalysed reaction is L-threonylcarbamoyladenylate + adenosine(37) in tRNA = N(6)-L-threonylcarbamoyladenosine(37) in tRNA + AMP + H(+). In terms of biological role, required for the formation of a threonylcarbamoyl group on adenosine at position 37 (t(6)A37) in tRNAs that read codons beginning with adenine. Is involved in the transfer of the threonylcarbamoyl moiety of threonylcarbamoyl-AMP (TC-AMP) to the N6 group of A37, together with TsaE and TsaB. TsaD likely plays a direct catalytic role in this reaction. The polypeptide is tRNA N6-adenosine threonylcarbamoyltransferase (Methylorubrum populi (strain ATCC BAA-705 / NCIMB 13946 / BJ001) (Methylobacterium populi)).